A 231-amino-acid chain; its full sequence is tRNA (guanine-N(1)-)-methyltransferase (231 aa).

S-adenosyl-L-methionine-binding positions include Gly-111 and 131–136 (LGNYVL).

It belongs to the RNA methyltransferase TrmD family. In terms of assembly, homodimer.

Its subcellular location is the cytoplasm. It carries out the reaction guanosine(37) in tRNA + S-adenosyl-L-methionine = N(1)-methylguanosine(37) in tRNA + S-adenosyl-L-homocysteine + H(+). In terms of biological role, specifically methylates guanosine-37 in various tRNAs. This Leptospira interrogans serogroup Icterohaemorrhagiae serovar copenhageni (strain Fiocruz L1-130) protein is tRNA (guanine-N(1)-)-methyltransferase.